Reading from the N-terminus, the 191-residue chain is UPF0301 protein Bphy_2327 (191 aa).

The protein belongs to the UPF0301 (AlgH) family.

The chain is UPF0301 protein Bphy_2327 from Paraburkholderia phymatum (strain DSM 17167 / CIP 108236 / LMG 21445 / STM815) (Burkholderia phymatum).